Here is an 819-residue protein sequence, read N- to C-terminus: Cadherin-24 (819 aa).

The N-terminal stretch at 1 to 19 is a signal peptide; the sequence is MWGLVRLLLAWLGGWGCMG. The propeptide occupies 21-44; the sequence is LAAPARAWAGSREHPGPALLRTRR. Residues 45 to 641 lie on the Extracellular side of the membrane; that stretch reads SWVWNQFFVI…LSAAGLSTGA (597 aa). Cadherin domains follow at residues 46-150, 151-259, 260-374, 375-517, and 517-630; these read WVWN…PPIF, PLGP…PPKF, PQSL…PPAF, TQAA…APQL, and LAEP…WPEA. Residues asparagine 446, asparagine 548, and asparagine 563 are each glycosylated (N-linked (GlcNAc...) asparagine). A helical membrane pass occupies residues 642–662; the sequence is LLAIITCVGALLALVVLFVAL. Residues 663–819 lie on the Cytoplasmic side of the membrane; that stretch reads RRQKQEALMV…LYGAKEPPAP (157 aa). A disordered region spans residues 768–800; that stretch reads YEGRGSSCGSLSSLGSGSEAGGAPGPAEPLDDW. Residues 771–784 are compositionally biased toward low complexity; that stretch reads RGSSCGSLSSLGSG.

In terms of assembly, associates with alpha-, beta- and delta-catenins.

It localises to the cell membrane. Its function is as follows. Cadherins are calcium-dependent cell adhesion proteins. They preferentially interact with themselves in a homophilic manner in connecting cells; cadherins may thus contribute to the sorting of heterogeneous cell types. Cadherin-24 mediate strong cell-cell adhesion. The protein is Cadherin-24 (CDH24) of Homo sapiens (Human).